Consider the following 453-residue polypeptide: tRNA-2-methylthio-N(6)-dimethylallyladenosine synthase (453 aa).

The MTTase N-terminal domain occupies 4–118; it reads KKFYIENYGC…IPNLINNFFK (115 aa). [4Fe-4S] cluster contacts are provided by C13, C49, C83, C156, C160, and C163. The Radical SAM core domain maps to 142–388; sequence EEKKITAFVT…NLQKTHSYYR (247 aa). The 64-residue stretch at 390 to 453 folds into the TRAM domain; sequence RKYIGSIQDI…SATLVGDIYV (64 aa).

This sequence belongs to the methylthiotransferase family. MiaB subfamily. Monomer. [4Fe-4S] cluster is required as a cofactor.

It is found in the cytoplasm. The catalysed reaction is N(6)-dimethylallyladenosine(37) in tRNA + (sulfur carrier)-SH + AH2 + 2 S-adenosyl-L-methionine = 2-methylsulfanyl-N(6)-dimethylallyladenosine(37) in tRNA + (sulfur carrier)-H + 5'-deoxyadenosine + L-methionine + A + S-adenosyl-L-homocysteine + 2 H(+). In terms of biological role, catalyzes the methylthiolation of N6-(dimethylallyl)adenosine (i(6)A), leading to the formation of 2-methylthio-N6-(dimethylallyl)adenosine (ms(2)i(6)A) at position 37 in tRNAs that read codons beginning with uridine. The protein is tRNA-2-methylthio-N(6)-dimethylallyladenosine synthase of Karelsulcia muelleri (strain GWSS) (Sulcia muelleri).